The chain runs to 247 residues: Probable transcriptional regulatory protein ETA_14870 (247 aa).

Residues 1 to 20 (MAGHSKWANTKHRKAAQDAK) are disordered.

The protein belongs to the TACO1 family.

It localises to the cytoplasm. This is Probable transcriptional regulatory protein ETA_14870 from Erwinia tasmaniensis (strain DSM 17950 / CFBP 7177 / CIP 109463 / NCPPB 4357 / Et1/99).